A 115-amino-acid polypeptide reads, in one-letter code: Holo-[acyl-carrier-protein] synthase (115 aa).

2 residues coordinate Mg(2+): Asp6 and Glu51.

It belongs to the P-Pant transferase superfamily. AcpS family. Mg(2+) serves as cofactor.

The protein resides in the cytoplasm. The catalysed reaction is apo-[ACP] + CoA = holo-[ACP] + adenosine 3',5'-bisphosphate + H(+). Its function is as follows. Transfers the 4'-phosphopantetheine moiety from coenzyme A to a Ser of acyl-carrier-protein. This is Holo-[acyl-carrier-protein] synthase from Campylobacter jejuni (strain RM1221).